The sequence spans 131 residues: Small ribosomal subunit protein eS6 (131 aa).

This sequence belongs to the eukaryotic ribosomal protein eS6 family.

In Halobacterium salinarum (strain ATCC 29341 / DSM 671 / R1), this protein is Small ribosomal subunit protein eS6.